The primary structure comprises 21 residues: Major outer membrane protein (21 aa).

In terms of assembly, disulfide bond interactions within and between MOMP molecules and other components form high molecular-weight oligomers.

The protein localises to the cell outer membrane. In terms of biological role, structural rigidity of the outer membrane of elementary bodies and porin forming, permitting diffusion of solutes through the intracellular reticulate body membrane. The sequence is that of Major outer membrane protein from Actinobacillus suis.